The primary structure comprises 296 residues: Class E basic helix-loop-helix protein 22 (296 aa).

Positions 26-70 (SAFRPPQGLDLSQPGDRSPLHCYDGPDPSDLLRHHQHHHQASSGA) are disordered. In terms of domain architecture, bHLH spans 153–207 (TLRLNINARERRRMHDLNDALDELRAVIPYAHSPSVRKLSKIATLLLAKNYILMQ).

It is found in the nucleus. Its function is as follows. May act as a transcriptional repressor. The sequence is that of Class E basic helix-loop-helix protein 22 (bhlhe22) from Xenopus tropicalis (Western clawed frog).